Here is a 457-residue protein sequence, read N- to C-terminus: Neuropeptide receptor npr-1 (457 aa).

The Extracellular segment spans residues 1–22 (MEVENFTDCQVYWKVYPDPSQS). A helical transmembrane segment spans residues 23 to 43 (IYAIVPFLTVYLFLFFLGLFG). Residues 44-62 (NVTLIYVTCSHKALLSVQN) lie on the Cytoplasmic side of the membrane. The helical transmembrane segment at 63-83 (IFILNLAASDCMMCILSLPIT) threads the bilayer. Residues 84–100 (PITNVYKNWYFGNLLCH) are Extracellular-facing. A disulfide bond links cysteine 99 and cysteine 178. Residues 101-121 (LIPCIQGISIFVCTFSLGAIA) form a helical membrane-spanning segment. Topologically, residues 122-140 (LDRYILVVRPHSTPLSQRG) are cytoplasmic. Residues 141-161 (AFLTTVLLWILSFVVTLPYAF) form a helical membrane-spanning segment. Residues 162–193 (NMQMIEYTEERICGYFCTEKWESAKSRRAYTM) lie on the Extracellular side of the membrane. The chain crosses the membrane as a helical span at residues 194–214 (IVMLAQFVVPFAVMAFCYANI). Residues 215–279 (VSVLSKRAQT…LQNRRTTSIL (65 aa)) are Cytoplasmic-facing. Residues 280-300 (VTMVVWFGITWLPHNVISLII) form a helical membrane-spanning segment. Residues 301-324 (EYDDTQSFFRLYGRDDYDISYLLN) lie on the Extracellular side of the membrane. The helical transmembrane segment at 325–345 (LFTHSIAMSNNVLNPVLYAWL) threads the bilayer. Residues 346 to 457 (NPSFRQLVIK…IEFSVNDTLV (112 aa)) lie on the Cytoplasmic side of the membrane.

This sequence belongs to the G-protein coupled receptor 1 family. In terms of tissue distribution, expressed in neurons, including neurons in the head, the ventral nerve cord, and the preanal ganglion.

The protein localises to the membrane. In terms of biological role, G-protein coupled receptor for FARP(FMRFamide related peptide) neuropeptides. Activated by FARP neuropeptides flp-18 and flp-21. Plays a role in modulating social and feeding behavior. Required to modulate locomotion quiescence during the sleep-like state called lethargus, which occurs during molting between larval and adult stages, in part by regulating touch sensitivity. In Caenorhabditis elegans, this protein is Neuropeptide receptor npr-1.